The sequence spans 200 residues: Serine/arginine-rich splicing factor RSZ23 (200 aa).

Residues 2–71 (ARVYVGNLDP…NGWRVELSTK (70 aa)) enclose the RRM domain. The segment at 86–103 (MKCYECGEPGHFARECRL) adopts a CCHC-type zinc-finger fold. The segment at 105–200 (IGSGGLGSGR…REESPYANNA (96 aa)) is disordered. Over residues 113 to 139 (GRRRSRSRSRSPRYRGRSRSRSPRYRR) the composition is skewed to basic residues.

Belongs to the splicing factor SR family. Extensively phosphorylated on serine residues in the RS domain. In terms of tissue distribution, expressed in roots, leaves and immature seeds.

It is found in the nucleus. Functionally, involved in pre-mRNA splicing. In protoplast assay, enhances splicing efficiency of WAXY intron 1 and alters the selection of the 5'-splice sites by stimulating site 1 (proximal site). The polypeptide is Serine/arginine-rich splicing factor RSZ23 (RSZ23) (Oryza sativa subsp. japonica (Rice)).